Reading from the N-terminus, the 487-residue chain is MREKQQGTTGAGGMSSGAAAASPGQRHASIVEMLSTPPPAIVVQTGMEDENVRATGGETAADGDERRTLSRQSSTSSTESHASATSCLTKVHAQKWQHIELSQLVEENKLVFINAEMSVEEAFNTLVEHNLTSLPVERYPGDMDCVTFDYNDLNSYLLLVLGKTTVADEEITRQCQSGQPVPVGRIVKLTPKNPFYKVPETEDLSTVMGILGSGVHRVAIVDSTSSSIRGILSQRRLMKYLWDNARQFSNLEVLLNSSLQKLGIGVLDPHTPPTSRQSRVISILDTEPLLVALHKMHTERISSIAVIDHQGMLLGNISVTDVKQVTRTSQYPLLHNTCRHFISVILNNRGLEMGKDSFPIFHVYPTSSLARTVAKLVATKAHRLWIVQPVEQGVLVSPPVAPTTIDGSSEFSSRHVSPSPAPSPAGSHGPLTTSASPLGTLDKEYSTGKLIGVVSLTDILGLLARKHTENKLVDPLSARRQRGSVAR.

Disordered stretches follow at residues 1 to 39 and 56 to 84; these read MREK…TPPP and GGET…HASA. The segment covering 70–84 has biased composition (low complexity); that stretch reads SRQSSTSSTESHASA. CBS domains follow at residues 105–165, 189–248, 274–333, and 396–469; these read VEEN…GKTT, LTPK…ARQF, TSRQ…QYPL, and VSPP…KHTE. A disordered region spans residues 406 to 439; the sequence is DGSSEFSSRHVSPSPAPSPAGSHGPLTTSASPLG. Positions 414-430 are enriched in low complexity; that stretch reads RHVSPSPAPSPAGSHGP.

Belongs to the SDS23 family.

The protein localises to the cytoplasm. It is found in the nucleus. In terms of biological role, involved in DNA replication and cell separation. The polypeptide is Protein SDS23 (SDS23) (Eremothecium gossypii (strain ATCC 10895 / CBS 109.51 / FGSC 9923 / NRRL Y-1056) (Yeast)).